A 99-amino-acid chain; its full sequence is Orphan antixoxin protein TacA (99 aa).

It belongs to the TacA antitoxin family.

In terms of biological role, putative antitoxin component of a toxin-antitoxin (TA) system; its cognate toxin (usually a tRNA acetylase) is unknown. The protein is Orphan antixoxin protein TacA of Haemophilus influenzae (strain ATCC 51907 / DSM 11121 / KW20 / Rd).